A 433-amino-acid chain; its full sequence is ATP-dependent protease ATPase subunit HslU (433 aa).

ATP-binding positions include Ile-18, 60-65 (GVGKTE), Asp-246, Glu-311, and Arg-383.

It belongs to the ClpX chaperone family. HslU subfamily. As to quaternary structure, a double ring-shaped homohexamer of HslV is capped on each side by a ring-shaped HslU homohexamer. The assembly of the HslU/HslV complex is dependent on binding of ATP.

The protein resides in the cytoplasm. Functionally, ATPase subunit of a proteasome-like degradation complex; this subunit has chaperone activity. The binding of ATP and its subsequent hydrolysis by HslU are essential for unfolding of protein substrates subsequently hydrolyzed by HslV. HslU recognizes the N-terminal part of its protein substrates and unfolds these before they are guided to HslV for hydrolysis. This is ATP-dependent protease ATPase subunit HslU from Cereibacter sphaeroides (strain KD131 / KCTC 12085) (Rhodobacter sphaeroides).